We begin with the raw amino-acid sequence, 120 residues long: ATP-dependent Clp protease adapter protein ClpS (120 aa).

The interval Met-1–Ala-27 is disordered.

The protein belongs to the ClpS family. As to quaternary structure, binds to the N-terminal domain of the chaperone ClpA.

Involved in the modulation of the specificity of the ClpAP-mediated ATP-dependent protein degradation. The polypeptide is ATP-dependent Clp protease adapter protein ClpS (Pseudomonas putida (strain GB-1)).